Consider the following 356-residue polypeptide: MAADEPKNLSFVLEGIKKVKFEDRPVPVLKDAHDVLVNVRYTGICGSDVHYWDHGSIGPFVLTEPMVLGHESSGVVTEIGPAVKSLKVGDRVALEPGICCRRCEPCKSGKYNLCVDMVFAATPPYDGTLAKYYVLPEDFCYKLPSAMDLKDGALMEPLGVAVHITRQAEVKPGDTVVVFGAGPVGLLCCAASRAFGAIKIISVDIQPERLDFAKKYAATGVFLPEKASAVENAERLRSGHGLGRGADVVIDASGAEQSVHTGIYVARPGGTYVQGGMGRDEISFPIMAACTKELNMKGSFRYNSGDYKLALELVGSGRLSVKELVTKVVAFTDAEQAFEEVKAGKGIKTLIAGVDG.

Residues Cys45, His70, and Glu71 each contribute to the Zn(2+) site. 180–185 (GAGPVG) is an NAD(+) binding site.

Belongs to the zinc-containing alcohol dehydrogenase family. It depends on Zn(2+) as a cofactor.

It catalyses the reaction xylitol + NAD(+) = D-xylulose + NADH + H(+). The protein operates within carbohydrate degradation; L-arabinose degradation via L-arabinitol; D-xylulose 5-phosphate from L-arabinose (fungal route): step 4/5. In terms of biological role, xylitol dehydrogenase which catalyzes the conversion of xylitol to D-xylulose. Xylose is a major component of hemicelluloses such as xylan. Most fungi utilize D-xylose via three enzymatic reactions, xylose reductase (XR), xylitol dehydrogenase (XDH), and xylulokinase, to form xylulose 5-phosphate, which enters pentose phosphate pathway. The polypeptide is Probable D-xylulose reductase A (xdhA) (Arthroderma otae (strain ATCC MYA-4605 / CBS 113480) (Microsporum canis)).